The sequence spans 424 residues: UPF0229 protein PFL_5654 (424 aa).

The segment at 85–108 is disordered; the sequence is GEHIARPQGGGGGGGGRGKAGNSG. A compositionally biased stretch (gly residues) spans 92-108; the sequence is QGGGGGGGGRGKAGNSG.

The protein belongs to the UPF0229 family.

The chain is UPF0229 protein PFL_5654 from Pseudomonas fluorescens (strain ATCC BAA-477 / NRRL B-23932 / Pf-5).